Reading from the N-terminus, the 314-residue chain is Probable cell division protein WhiA (314 aa).

The H-T-H motif DNA-binding region spans 274–308 (SLKELGEMVSTGTISKSGVNHRLRKLNELADKIRS).

This sequence belongs to the WhiA family.

Functionally, involved in cell division and chromosome segregation. The sequence is that of Probable cell division protein WhiA from Staphylococcus carnosus (strain TM300).